The following is a 145-amino-acid chain: Large ribosomal subunit protein uL13 (145 aa).

The protein belongs to the universal ribosomal protein uL13 family. As to quaternary structure, part of the 50S ribosomal subunit.

In terms of biological role, this protein is one of the early assembly proteins of the 50S ribosomal subunit, although it is not seen to bind rRNA by itself. It is important during the early stages of 50S assembly. In Bacillus cereus (strain ZK / E33L), this protein is Large ribosomal subunit protein uL13.